We begin with the raw amino-acid sequence, 161 residues long: Pro-corazonin (161 aa).

An N-terminal signal peptide occupies residues 1–20; sequence MMRLLLLPLFLFTLSMACMG. Q21 is modified (pyrrolidone carboxylic acid). Asparagine amide is present on N31. A propeptide spanning residues 70–161 is cleaved from the precursor; that stretch reads LERCLAQLQR…SGEPSVFGKH (92 aa). Disordered regions lie at residues 93–125 and 142–161; these read NANRPEPDSSDSGSSRNRANNNNENVLYPTPIQ and VAGSGPTGAGSGEPSVFGKH. Positions 102 to 117 are enriched in low complexity; the sequence is SDSGSSRNRANNNNEN.

Belongs to the corazonin family.

It localises to the secreted. In terms of biological role, cardioactive peptide. Corazonin is probably involved in the physiological regulation of the heart beat. Clock (Clk) and cycle (cyc) proteins negatively regulate Crz transcription in a cell-specific manner. This chain is Pro-corazonin, found in Drosophila pseudoobscura pseudoobscura (Fruit fly).